A 178-amino-acid chain; its full sequence is Large ribosomal subunit protein bL25 (178 aa).

This sequence belongs to the bacterial ribosomal protein bL25 family. CTC subfamily. As to quaternary structure, part of the 50S ribosomal subunit; part of the 5S rRNA/L5/L18/L25 subcomplex. Contacts the 5S rRNA. Binds to the 5S rRNA independently of L5 and L18.

This is one of the proteins that binds to the 5S RNA in the ribosome where it forms part of the central protuberance. This chain is Large ribosomal subunit protein bL25, found in Campylobacter hominis (strain ATCC BAA-381 / DSM 21671 / CCUG 45161 / LMG 19568 / NCTC 13146 / CH001A).